The sequence spans 269 residues: MKKPVFFLLTMIICSYISFACANISDYKVMTWNLQGSSASTESKWNVNVRQLLSGTAGVDILMVQEAGAVPTSAVPTGRHIQPFGVGIPIDEYTWNLGTTSRQDIRYIYHSAIDVGARRVNLAIVSRQRADNVYVLRPTTVASRPVIGIGLGNDVFLTAHALASGGPDAAAIVRVTINFFRQPQMRHLSWFLAGDFNRSPDRLENDLMTEHLERVVAVLAPTEPTQIGGGILDYGVIVDRAPYSQRVEALRNPQLASDHYPVAFLARSC.

Positions 1–22 are cleaved as a signal peptide; sequence MKKPVFFLLTMIICSYISFACA.

The protein resides in the secreted. Produces a CDT (cytolethal distending toxin) activity, which causes DNA damage in intoxicated cells. This damage induces G2/M cell cycle arrest, chromatin fragmentation, cell distention and nucleus enlargement. The chain is Cytolethal distending toxin subunit B homolog (cdtB) from Salmonella typhi.